The primary structure comprises 261 residues: Carnitinyl-CoA dehydratase (261 aa).

Residue Glu111 is the Nucleophile of the active site. Glu131 functions as the Proton acceptor in the catalytic mechanism.

Belongs to the enoyl-CoA hydratase/isomerase family.

It carries out the reaction (R)-carnitinyl-CoA = crotonobetainyl-CoA + H2O. Its pathway is amine and polyamine metabolism; carnitine metabolism. Catalyzes the reversible dehydration of L-carnitinyl-CoA to crotonobetainyl-CoA. This Escherichia coli (strain SMS-3-5 / SECEC) protein is Carnitinyl-CoA dehydratase.